A 200-amino-acid polypeptide reads, in one-letter code: Phospholipase A2 inhibitor CgMIP-I (200 aa).

Positions 1 to 19 (MKYLHTICLLFIFVARGNS) are cleaved as a signal peptide. Disulfide bonds link Cys-22–Cys-46, Cys-25–Cys-32, Cys-39–Cys-67, Cys-73–Cys-94, Cys-95–Cys-100, Cys-118–Cys-143, and Cys-136–Cys-165. N-linked (GlcNAc...) asparagine glycosylation occurs at Asn-176.

Belongs to the CNF-like-inhibitor family. As to quaternary structure, homomer of 110 kDa composed of 20-25-kDa subunits. In terms of processing, N-glycosylated. The glycosidic chain may contain superficial sialic acid residues. In terms of tissue distribution, expressed by the liver.

It localises to the secreted. Its function is as follows. Inhibits the enzymatic activity of basic phospholipase A2. Specifically neutralizes PLA2, myotoxic, edema-forming, cytolytic, and anti-coagulant activities, as well as intracerebral lethal effect of the basic myotoxin I from the same venom (AC P0DQP6), crotoxin heterodimer and crotoxin subunit B alone. Does not block the enzymatic activity of crude acidic PLA2 fractions from the same venom. The sequence is that of Phospholipase A2 inhibitor CgMIP-I from Cerrophidion godmani (Porthidium godmani).